The sequence spans 470 residues: FAD-dependent monooxygenase dpchE (470 aa).

The N-terminal stretch at 1-24 (MSEPHFKVIIVGGSITGLTLAHSL) is a signal peptide. Glu35, Gly49, and Arg108 together coordinate FAD. Asn128 carries an N-linked (GlcNAc...) asparagine glycan. Residue Arg193 is part of the active site. Residues Asp312 and Ala325 each coordinate FAD. Residues 447–463 (WAVVSRSVLLLVGLAIL) traverse the membrane as a helical segment.

It belongs to the paxM FAD-dependent monooxygenase family. The cofactor is FAD.

It is found in the membrane. It functions in the pathway secondary metabolite biosynthesis; terpenoid biosynthesis. FAD-dependent monooxygenase; part of the gene cluster that mediates the biosynthesis of the diterpenoid pyrones higginsianins A and B. The first step of the pathway is the synthesis of the alpha-pyrone moiety by the polyketide synthase dpchA via condensation of one acetyl-CoA starter unit with 3 malonyl-CoA units and 2 methylations. The alpha-pyrone is then combined with geranylgeranyl pyrophosphate (GGPP) formed by the GGPP synthase dpchD through the action of the prenyltransferase dpchC to yield a linear alpha-pyrone diterpenoid. Subsequent steps in the diterpenoid pyrone biosynthetic pathway involve the decalin core formation, which is initiated by the epoxidation of the C10-C11 olefin by the FAD-dependent oxidoreductase dpchE, and is followed by a cyclization cascade catalyzed by the terpene cyclase dpchB. The short chain dehydrogenase/reductase dpchG then oxidizes the 8S hydroxy group to a ketone and the short chain dehydrogenase/reductase dpchH reduces the ketone to the 8R hydroxy group to yield higginsianin B. Finally, the FAD-dependent oxidoreductase dpchF converts higginsianin B into higginsianin A. In Colletotrichum higginsianum (strain IMI 349063) (Crucifer anthracnose fungus), this protein is FAD-dependent monooxygenase dpchE.